A 1253-amino-acid polypeptide reads, in one-letter code: Cytoplasmic FMR1-interacting protein 1 (1253 aa).

Serine 583 is subject to Phosphoserine. Phosphothreonine is present on threonine 1234.

This sequence belongs to the CYFIP family. Component of the WAVE1 complex composed of ABI2, CYFIP1 or CYFIP2, BRK1, NCKAP1 and WASF1/WAVE1. Within the complex, a heterodimer containing NCKAP1 and CYFIP1 interacts with a heterotrimer formed by WAVE1, ABI2 and BRK1. Component of the CYFIP1-EIF4E-FMR1 complex which is composed of CYFIP, EIF4E and FMR1. Interacts with FMR1 but does not bind to related proteins FXR1 or FXR2. Interaction with EIF4E stimulates FMR1 binding. Component of the WAVE2 complex composed of ABI1, CYFIP1/SRA1, NCKAP1/NAP1 (NCKAP1l/HEM1 in hematopoietic cells) and WASF2/WAVE2. Interacts with the active GTP-bound form of RAC1. Interacts through its C-terminus with the C-terminus of DPYSL2/CRMP2 which is necessary for DPYSL2-induced axon outgrowth. Interacts with NYAP1, NYAP2 and MYO16. Interacts with TMEM108 (via N-terminus); the interaction associates TMEM108 with the WAVE1 complex.

The protein localises to the cytoplasm. It localises to the perinuclear region. Its subcellular location is the cell projection. It is found in the lamellipodium. The protein resides in the ruffle. The protein localises to the synapse. It localises to the synaptosome. Functionally, component of the CYFIP1-EIF4E-FMR1 complex which binds to the mRNA cap and mediates translational repression. In the CYFIP1-EIF4E-FMR1 complex this subunit is an adapter between EIF4E and FMR1. Promotes the translation repression activity of FMR1 in brain probably by mediating its association with EIF4E and mRNA. Regulates formation of membrane ruffles and lamellipodia. Plays a role in axon outgrowth. Binds to F-actin but not to RNA. Part of the WAVE complex that regulates actin filament reorganization via its interaction with the Arp2/3 complex. Actin remodeling activity is regulated by RAC1. Regulator of epithelial morphogenesis. As component of the WAVE1 complex, required for BDNF-NTRK2 endocytic trafficking and signaling from early endosomes. May act as an invasion suppressor in cancers. This Homo sapiens (Human) protein is Cytoplasmic FMR1-interacting protein 1.